The sequence spans 148 residues: Transcriptional regulator MraZ (148 aa).

2 consecutive SpoVT-AbrB domains span residues 5–51 (VSIL…PEPN) and 80–123 (AETL…NAEE).

It belongs to the MraZ family. As to quaternary structure, forms oligomers.

Its subcellular location is the cytoplasm. The protein localises to the nucleoid. This is Transcriptional regulator MraZ from Chromobacterium violaceum (strain ATCC 12472 / DSM 30191 / JCM 1249 / CCUG 213 / NBRC 12614 / NCIMB 9131 / NCTC 9757 / MK).